The following is a 721-amino-acid chain: BRCA1-A complex subunit RAP80 (721 aa).

The segment at 1 to 65 (MPRRKKKGKE…GLQKTKIKQS (65 aa)) is disordered. The tract at residues 1 to 101 (MPRRKKKGKE…SEQEAREVNS (101 aa)) is necessary for transcriptional repression. Lys20 participates in a covalent cross-link: Glycyl lysine isopeptide (Lys-Gly) (interchain with G-Cter in SUMO2). Residue Ser29 is modified to Phosphoserine. Lys31 participates in a covalent cross-link: Glycyl lysine isopeptide (Lys-Gly) (interchain with G-Cter in SUMO2). A phosphoserine mark is found at Ser44 and Ser46. The LR motif signature appears at 60–78 (TKIKQSSRAKCLAKRKIAQ). Glycyl lysine isopeptide (Lys-Gly) (interchain with G-Cter in SUMO2) cross-links involve residues Lys75 and Lys90. Positions 80-99 (TEEEQFALALKMSEQEAREV) constitute a UIM 1 domain. The tract at residues 93-204 (EQEAREVNSQ…SVSSGSWDQS (112 aa)) is disordered. A UIM-linker region spans residues 97–103 (REVNSQE). Positions 100–200 (NSQEEEEEEL…EEPVSVSSGS (101 aa)) are necessary for interaction with NR6A1 N-terminus. At Ser101 the chain carries Phosphoserine. In terms of domain architecture, UIM 2 spans 105-124 (EEEELLRKAIAESLNSCRPS). Over residues 117 to 130 (SLNSCRPSDASATR) the composition is skewed to polar residues. Ser140 is modified (phosphoserine). Low complexity predominate over residues 194–204 (VSVSSGSWDQS). Position 205 is a phosphoserine (Ser205). Lys245 participates in a covalent cross-link: Glycyl lysine isopeptide (Lys-Gly) (interchain with G-Cter in SUMO2). The AIR stretch occupies residues 270 to 400 (TGGTVNYFWG…EEEPTTSHGQ (131 aa)). A disordered region spans residues 334-369 (NECGQGEQASEKNEGISEDMGDEDKEERQESRASVW). A compositionally biased stretch (acidic residues) spans 349 to 358 (ISEDMGDEDK). Glycyl lysine isopeptide (Lys-Gly) (interchain with G-Cter in SUMO2) cross-links involve residues Lys382 and Lys387. Residues 391-418 (EEEPTTSHGQSSQGLFVEETSEEGNSVP) form a disordered region. Residues 400 to 500 (QSSQGLFVEE…EIHTSTFSSS (101 aa)) form a necessary for interaction with NR6A1 C-terminus region. Phosphoserine occurs at positions 402 and 420. Lys429 participates in a covalent cross-link: Glycyl lysine isopeptide (Lys-Gly) (interchain with G-Cter in SUMO2). Position 467 is a phosphoserine (Ser467). The UBZ4-type zinc finger occupies 502–529 (QVSCPLCDQGFPPTKIERHAMYCNGLMG). Zn(2+) contacts are provided by Cys505, Cys508, His520, and Cys524. The zinc-finger-like region stretch occupies residues 505–582 (CPLCDQGFPP…REYQCHVESC (78 aa)). Glycyl lysine isopeptide (Lys-Gly) (interchain with G-Cter in SUMO2) cross-links involve residues Lys544, Lys559, Lys562, and Lys607. Ser627 is modified (phosphoserine). Glycyl lysine isopeptide (Lys-Gly) (interchain with G-Cter in SUMO2) cross-links involve residues Lys635 and Lys642. Phosphoserine is present on residues Ser655 and Ser679. Glycyl lysine isopeptide (Lys-Gly) (interchain with G-Cter in SUMO2) cross-links involve residues Lys698 and Lys699.

The protein belongs to the RAP80 family. In terms of assembly, component of the ARISC complex, at least composed of UIMC1/RAP80, ABRAXAS1, BRCC3/BRCC36, BABAM2 and BABAM1/NBA1. Component of the BRCA1-A complex, at least composed of the BRCA1, BARD1, UIMC1/RAP80, ABRAXAS1, BRCC3/BRCC36, BABAM2 and BABAM1/NBA1. In the BRCA1-A complex, interacts directly with ABRAXAS1. Interacts with UBE2I. Interacts with NR6A1. Interacts with ESR1. Interacts with TSP57. Interacts with TRAIP. Sumoylated. In terms of processing, phosphorylated upon DNA damage by ATM or ATR.

The protein resides in the nucleus. In terms of biological role, ubiquitin-binding protein. Specifically recognizes and binds 'Lys-63'-linked ubiquitin. Plays a central role in the BRCA1-A complex by specifically binding 'Lys-63'-linked ubiquitinated histones H2A and H2AX at DNA lesions sites, leading to target the BRCA1-BARD1 heterodimer to sites of DNA damage at double-strand breaks (DSBs). The BRCA1-A complex also possesses deubiquitinase activity that specifically removes 'Lys-63'-linked ubiquitin on histones H2A and H2AX. Also weakly binds monoubiquitin but with much less affinity than 'Lys-63'-linked ubiquitin. May interact with monoubiquitinated histones H2A and H2B; the relevance of such results is however unclear in vivo. Does not bind Lys-48'-linked ubiquitin. May indirectly act as a transcriptional repressor by inhibiting the interaction of NR6A1 with the corepressor NCOR1. In Sus scrofa (Pig), this protein is BRCA1-A complex subunit RAP80 (UIMC1).